The primary structure comprises 150 residues: Large ribosomal subunit protein bL9 (150 aa).

The protein belongs to the bacterial ribosomal protein bL9 family.

Functionally, binds to the 23S rRNA. The chain is Large ribosomal subunit protein bL9 from Baumannia cicadellinicola subsp. Homalodisca coagulata.